Reading from the N-terminus, the 163-residue chain is NADH-quinone oxidoreductase subunit I (163 aa).

2 consecutive 4Fe-4S ferredoxin-type domains span residues 53 to 83 and 94 to 123; these read LRRY…IEAG and VRYD…EGPN. [4Fe-4S] cluster is bound by residues C63, C66, C69, C73, C103, C106, C109, and C113.

It belongs to the complex I 23 kDa subunit family. In terms of assembly, NDH-1 is composed of 14 different subunits. Subunits NuoA, H, J, K, L, M, N constitute the membrane sector of the complex. [4Fe-4S] cluster serves as cofactor.

Its subcellular location is the cell inner membrane. It carries out the reaction a quinone + NADH + 5 H(+)(in) = a quinol + NAD(+) + 4 H(+)(out). Functionally, NDH-1 shuttles electrons from NADH, via FMN and iron-sulfur (Fe-S) centers, to quinones in the respiratory chain. The immediate electron acceptor for the enzyme in this species is believed to be ubiquinone. Couples the redox reaction to proton translocation (for every two electrons transferred, four hydrogen ions are translocated across the cytoplasmic membrane), and thus conserves the redox energy in a proton gradient. In Brucella anthropi (strain ATCC 49188 / DSM 6882 / CCUG 24695 / JCM 21032 / LMG 3331 / NBRC 15819 / NCTC 12168 / Alc 37) (Ochrobactrum anthropi), this protein is NADH-quinone oxidoreductase subunit I.